We begin with the raw amino-acid sequence, 163 residues long: uncharacterized protein (163 aa).

4Fe-4S ferredoxin-type domains lie at 30–59 (REII…YSSD), 61–90 (LYIT…IIRL), 105–136 (KYEF…EYGS), and 136–163 (SKIR…IILR). Residues Cys-39, Cys-42, Cys-45, Cys-49, Cys-70, Cys-73, Cys-76, Cys-80, Cys-116, Cys-119, Cys-122, Cys-126, Cys-145, Cys-148, Cys-151, and Cys-155 each coordinate [4Fe-4S] cluster.

This is an uncharacterized protein from Methanocaldococcus jannaschii (strain ATCC 43067 / DSM 2661 / JAL-1 / JCM 10045 / NBRC 100440) (Methanococcus jannaschii).